Here is a 148-residue protein sequence, read N- to C-terminus: MVVESNCEIPENLYYFIEGKNTVWAKLESPDTIVVGITDLAQTMAGKIVKVRIKKKGTKVEKGRPVATMESGKWAGPVPAPVTGEVVEVNAEAEKSPIIINQDPYGKGWLVKMKMSNPEELKQLFSGQAAIQKLKELIASEKLTCKRL.

Positions 32–114 constitute a Lipoyl-binding domain; sequence TIVVGITDLA…YGKGWLVKMK (83 aa). An N6-lipoyllysine modification is found at Lys-73.

This sequence belongs to the GcvH family. As to quaternary structure, the glycine cleavage system is composed of four proteins: P, T, L and H. The cofactor is (R)-lipoate.

Its function is as follows. The glycine cleavage system catalyzes the degradation of glycine. The H protein shuttles the methylamine group of glycine from the P protein to the T protein. This Saccharolobus solfataricus (strain ATCC 35092 / DSM 1617 / JCM 11322 / P2) (Sulfolobus solfataricus) protein is Probable glycine cleavage system H protein 2.